Consider the following 1265-residue polypeptide: 5-oxoprolinase (1265 aa).

Belongs to the oxoprolinase family. In terms of assembly, homodimer.

The protein localises to the cytoplasm. It localises to the cytosol. It carries out the reaction 5-oxo-L-proline + ATP + 2 H2O = L-glutamate + ADP + phosphate + H(+). Its function is as follows. Catalyzes the cleavage of 5-oxo-L-proline to form L-glutamate coupled to the hydrolysis of ATP to ADP and inorganic phosphate. The chain is 5-oxoprolinase (oplah) from Dictyostelium discoideum (Social amoeba).